The primary structure comprises 132 residues: Large ribosomal subunit protein uL14 (132 aa).

It belongs to the universal ribosomal protein uL14 family. Part of the 50S ribosomal subunit. Forms a cluster with proteins L3 and L24e, part of which may contact the 16S rRNA in 2 intersubunit bridges.

In terms of biological role, binds to 23S rRNA. Forms part of two intersubunit bridges in the 70S ribosome. The protein is Large ribosomal subunit protein uL14 of Methanosarcina acetivorans (strain ATCC 35395 / DSM 2834 / JCM 12185 / C2A).